Reading from the N-terminus, the 55-residue chain is GQQPLCNDCFACARSLCICGDLVPQCHEGCQQCEKVDTGKPLYQCRSFEDYQCAN.

4 disulfide bridges follow: Cys-6/Cys-53, Cys-12/Cys-17, Cys-26/Cys-33, and Cys-30/Cys-45.

Belongs to the Bowman-Birk serine protease inhibitor family. In terms of tissue distribution, expressed in bulb (at protein level).

Serine protease inhibitor. Weakly inhibits trypsin (Ki = 167 nM). Does not inhibit bacterial subtilisin or mamallian chymotrypsin. The polypeptide is Bowman-Birk type proteinase inhibitor B1 (Hyacinthus orientalis (Common hyacinth)).